The sequence spans 218 residues: Ras-related protein Rab-4A (218 aa).

G23, T24, G25, K26, S27, C28, S42, H44, and T45 together coordinate GTP. S27 is a binding site for Mg(2+). The Switch 1 motif lies at 44–49 (HTIGVE). Mg(2+) contacts are provided by T45 and D68. Positions 70 to 79 (AGQERFRSVT) match the Switch 2 motif. Residue G71 coordinates GTP. Residue Q72 is modified to 5-glutamyl serotonin. GTP is bound by residues N126, K127, D129, A157, and L158. A Phosphoserine modification is found at S190. Position 204 is a phosphoserine; by CDK1 (S204). Residues C216 and C218 are each lipidated (S-geranylgeranyl cysteine). C218 bears the Cysteine methyl ester mark.

Belongs to the small GTPase superfamily. Rab family. In terms of assembly, interacts with SGSM1, SGSM2 and SGSM3. Interacts with RAB11FIP1, RABEP1, ZFYVE20 and RUFY1. Interacts (membrane-bound form) with NDRG1; the interaction involves NDRG1 in vesicular recycling of E-cadherin. Interacts (in GTP-bound form) with GRIPAP1 (via N-terminus). Interacts with RABEP1 and RBSN. Does not interact with HPS4. Interacts with RABEP2; this interaction may mediate VEGFR2 cell surface expression. The cofactor is Mg(2+). Serotonylation of Gln-72 by TGM2 during activation and aggregation of platelets leads to constitutive activation of GTPase activity. In terms of processing, phosphorylated by CDK1 kinase during mitosis.

It localises to the membrane. The protein resides in the cytoplasm. The protein localises to the early endosome membrane. It is found in the recycling endosome membrane. It catalyses the reaction GTP + H2O = GDP + phosphate + H(+). Regulated by guanine nucleotide exchange factors (GEFs) which promote the exchange of bound GDP for free GTP. Regulated by GTPase activating proteins (GAPs) which increase the GTP hydrolysis activity. Inhibited by GDP dissociation inhibitors (GDIs). Its function is as follows. The small GTPases Rab are key regulators of intracellular membrane trafficking, from the formation of transport vesicles to their fusion with membranes. Rabs cycle between an inactive GDP-bound form and an active GTP-bound form that is able to recruit to membranes different sets of downstream effectors directly responsible for vesicle formation, movement, tethering and fusion. RAB4A is involved in protein transport. Also plays a role in vesicular traffic. Mediates VEGFR2 endosomal trafficking to enhance VEGFR2 signaling. Acts as a regulator of platelet alpha-granule release during activation and aggregation of platelets. This chain is Ras-related protein Rab-4A, found in Rattus norvegicus (Rat).